The sequence spans 222 residues: Protein GrpE (222 aa).

The disordered stretch occupies residues 1-82 (MSDFNKDEYL…KADDTLTPLG (82 aa)). Over residues 20–71 (SGQAAPAAASADSAAAAAGATQEGAAQPAAAQSQENGDSAAADGADKAGAAD) the composition is skewed to low complexity.

The protein belongs to the GrpE family. Homodimer.

The protein resides in the cytoplasm. Functionally, participates actively in the response to hyperosmotic and heat shock by preventing the aggregation of stress-denatured proteins, in association with DnaK and GrpE. It is the nucleotide exchange factor for DnaK and may function as a thermosensor. Unfolded proteins bind initially to DnaJ; upon interaction with the DnaJ-bound protein, DnaK hydrolyzes its bound ATP, resulting in the formation of a stable complex. GrpE releases ADP from DnaK; ATP binding to DnaK triggers the release of the substrate protein, thus completing the reaction cycle. Several rounds of ATP-dependent interactions between DnaJ, DnaK and GrpE are required for fully efficient folding. In Bifidobacterium adolescentis (strain ATCC 15703 / DSM 20083 / NCTC 11814 / E194a), this protein is Protein GrpE.